Consider the following 234-residue polypeptide: Response regulator RppA (234 aa).

A Response regulatory domain is found at 2-118 (RILLVEDETD…ELLARLRALQ (117 aa)). Aspartate 53 bears the 4-aspartylphosphate mark. Residues 126 to 232 (PQILTLGNFS…VPGQGYRFTL (107 aa)) constitute a DNA-binding region (ompR/PhoB-type).

As to quaternary structure, interacts with histidine kinase Hik2; may accept phosphate from Hik2.

Functionally, member of two-component regulatory system RppA/RppB, involved in the establishment of the appropriate stoichiometry between the 2 photosystems. It senses changes in the plastoquinone (PQ) redox poise. Another group shows this two-component pair, renamed NrsR/NrsS, controls the nickel-dependent expression of the nrsBACD operon; they suggest the photosystem-related activities seen earlier are due to the expression of NrsS (RppB) in the absence of its natural substrate NrsR (RppA). May accept phosphate from Hik2 in a possible Hik2/RppA two-component system. The sequence is that of Response regulator RppA from Synechocystis sp. (strain ATCC 27184 / PCC 6803 / Kazusa).